We begin with the raw amino-acid sequence, 637 residues long: Phosphomethylpyrimidine synthase (637 aa).

Residues N242, M271, Y300, H336, 356-358 (SRG), 397-400 (DGLR), and E436 contribute to the substrate site. H440 lines the Zn(2+) pocket. Y463 serves as a coordination point for substrate. H504 is a binding site for Zn(2+). The [4Fe-4S] cluster site is built by C584, C587, and C592.

Belongs to the ThiC family. In terms of assembly, homodimer. The cofactor is [4Fe-4S] cluster.

The catalysed reaction is 5-amino-1-(5-phospho-beta-D-ribosyl)imidazole + S-adenosyl-L-methionine = 4-amino-2-methyl-5-(phosphooxymethyl)pyrimidine + CO + 5'-deoxyadenosine + formate + L-methionine + 3 H(+). The protein operates within cofactor biosynthesis; thiamine diphosphate biosynthesis. Its function is as follows. Catalyzes the synthesis of the hydroxymethylpyrimidine phosphate (HMP-P) moiety of thiamine from aminoimidazole ribotide (AIR) in a radical S-adenosyl-L-methionine (SAM)-dependent reaction. The protein is Phosphomethylpyrimidine synthase of Janthinobacterium sp. (strain Marseille) (Minibacterium massiliensis).